A 359-amino-acid polypeptide reads, in one-letter code: 3-dehydroquinate synthase (359 aa).

Residues serine 69–lysine 74, glycine 103–aspartate 107, threonine 127–threonine 128, lysine 139, lysine 148, and threonine 166–threonine 169 each bind NAD(+). Zn(2+)-binding residues include glutamate 181, histidine 242, and histidine 259.

It belongs to the sugar phosphate cyclases superfamily. Dehydroquinate synthase family. NAD(+) is required as a cofactor. It depends on Co(2+) as a cofactor. Zn(2+) serves as cofactor.

The protein resides in the cytoplasm. The enzyme catalyses 7-phospho-2-dehydro-3-deoxy-D-arabino-heptonate = 3-dehydroquinate + phosphate. It participates in metabolic intermediate biosynthesis; chorismate biosynthesis; chorismate from D-erythrose 4-phosphate and phosphoenolpyruvate: step 2/7. Functionally, catalyzes the conversion of 3-deoxy-D-arabino-heptulosonate 7-phosphate (DAHP) to dehydroquinate (DHQ). In Oceanobacillus iheyensis (strain DSM 14371 / CIP 107618 / JCM 11309 / KCTC 3954 / HTE831), this protein is 3-dehydroquinate synthase.